The primary structure comprises 315 residues: Ribosomal RNA small subunit methyltransferase H (315 aa).

Residues 36–38 (GGH), Asp-56, Phe-80, Asp-102, and Gln-109 each bind S-adenosyl-L-methionine.

It belongs to the methyltransferase superfamily. RsmH family.

The protein resides in the cytoplasm. It carries out the reaction cytidine(1402) in 16S rRNA + S-adenosyl-L-methionine = N(4)-methylcytidine(1402) in 16S rRNA + S-adenosyl-L-homocysteine + H(+). In terms of biological role, specifically methylates the N4 position of cytidine in position 1402 (C1402) of 16S rRNA. This chain is Ribosomal RNA small subunit methyltransferase H, found in Proteus mirabilis (strain HI4320).